Here is a 523-residue protein sequence, read N- to C-terminus: 2-isopropylmalate synthase (523 aa).

Residues 5–267 form the Pyruvate carboxyltransferase domain; that stretch reads VIIFDTTLRD…HTAINHQEIW (263 aa). Aspartate 14, histidine 202, histidine 204, and asparagine 238 together coordinate Mn(2+). The tract at residues 392-523 is regulatory domain; it reads RLDYFSVQSG…QHNENNKETV (132 aa).

This sequence belongs to the alpha-IPM synthase/homocitrate synthase family. LeuA type 1 subfamily. As to quaternary structure, homodimer. Mn(2+) is required as a cofactor.

The protein resides in the cytoplasm. The enzyme catalyses 3-methyl-2-oxobutanoate + acetyl-CoA + H2O = (2S)-2-isopropylmalate + CoA + H(+). It participates in amino-acid biosynthesis; L-leucine biosynthesis; L-leucine from 3-methyl-2-oxobutanoate: step 1/4. Its function is as follows. Catalyzes the condensation of the acetyl group of acetyl-CoA with 3-methyl-2-oxobutanoate (2-ketoisovalerate) to form 3-carboxy-3-hydroxy-4-methylpentanoate (2-isopropylmalate). In Shigella sonnei (strain Ss046), this protein is 2-isopropylmalate synthase.